Here is a 254-residue protein sequence, read N- to C-terminus: L-rhamnose 1-dehydrogenase (NADP(+)) (254 aa).

NADP(+) is bound by residues Gly-13, Ser-15, Arg-16, Ile-18, Asp-64, and Asn-91. Catalysis depends on Ser-144, which acts as the Proton donor. The beta-L-rhamnose site is built by Ser-144, Ser-146, Gln-154, and Tyr-157. Positions 157 and 161 each coordinate NADP(+). Residue Tyr-157 is the Proton acceptor of the active site. Lys-161 acts as the Lowers pKa of active site Tyr in catalysis. A beta-L-rhamnose-binding site is contributed by Thr-189. Ile-190 serves as a coordination point for NADP(+). A beta-L-rhamnose-binding site is contributed by Asn-195.

It belongs to the short-chain dehydrogenases/reductases (SDR) family.

It carries out the reaction L-rhamnofuranose + NADP(+) = L-rhamnono-1,4-lactone + NADPH + H(+). The protein operates within carbohydrate degradation; L-rhamnose degradation. Involved in the non-phosphorylated metabolic pathway of L-rhamnose catabolism. Catalyzes the oxidation of L-rhamnose to yield L-rhamnono-1,4-lactone. It can also oxidize L-lyxose and L-mannose, and uses only NADP. The chain is L-rhamnose 1-dehydrogenase (NADP(+)) from Thermoplasma acidophilum (strain ATCC 25905 / DSM 1728 / JCM 9062 / NBRC 15155 / AMRC-C165).